The chain runs to 371 residues: Cysteine endopeptidase Rep1 (371 aa).

An N-terminal signal peptide occupies residues 1–28 (MGRVISSWRVLAVVAALMAMAAVELCAA). The propeptide at 29–133 (IPFDERDLES…LPGFMYEGVR (105 aa)) is activation peptide. 3 disulfides stabilise this stretch: cysteine 156/cysteine 198, cysteine 190/cysteine 231, and cysteine 290/cysteine 342. Residue cysteine 159 is part of the active site. N-linked (GlcNAc...) asparagine glycosylation is present at asparagine 228. Active-site residues include histidine 296 and asparagine 317.

Belongs to the peptidase C1 family. Expressed in germinating seeds.

The protein resides in the protein storage vacuole. Cysteine endopeptidase that digests in vitro both the acidic and basic subunits of glutelin, the major seed storage protein of rice. Acts as a negative regulator of cell death. The sequence is that of Cysteine endopeptidase Rep1 from Oryza sativa subsp. japonica (Rice).